Here is an 86-residue protein sequence, read N- to C-terminus: Small ribosomal subunit protein bS20 (86 aa).

It belongs to the bacterial ribosomal protein bS20 family.

In terms of biological role, binds directly to 16S ribosomal RNA. In Arthrobacter sp. (strain FB24), this protein is Small ribosomal subunit protein bS20.